Consider the following 479-residue polypeptide: Poly(A) polymerase catalytic subunit (479 aa).

Active-site residues include D202 and D204. Ca(2+) contacts are provided by D202, D204, and D253.

It belongs to the poxviridae poly(A) polymerase catalytic subunit family. Heterodimer of a large (catalytic) subunit and a small (regulatory) subunit.

It carries out the reaction RNA(n) + ATP = RNA(n)-3'-adenine ribonucleotide + diphosphate. Functionally, polymerase that creates the 3'-poly(A) tail of mRNA's. This chain is Poly(A) polymerase catalytic subunit (OPG063), found in Homo sapiens (Human).